The following is a 197-amino-acid chain: Small ribosomal subunit protein uS4c (197 aa).

Residues 85–161 form the S4 RNA-binding domain; that stretch reads MRLDNILFRL…TGKELANHLN (77 aa).

This sequence belongs to the universal ribosomal protein uS4 family. Part of the 30S ribosomal subunit. Contacts protein S5. The interaction surface between S4 and S5 is involved in control of translational fidelity.

It is found in the plastid. One of the primary rRNA binding proteins, it binds directly to 16S rRNA where it nucleates assembly of the body of the 30S subunit. Functionally, with S5 and S12 plays an important role in translational accuracy. The chain is Small ribosomal subunit protein uS4c (rps4) from Cuscuta obtusiflora (Peruvian dodder).